A 210-amino-acid chain; its full sequence is MLPLPSCSLPILLLFLLPSVPIESQPPPSTLPPFLAPEWDLLSPRVVLSRGAPAGPPLLFLLEAGAFRESAGAPANRSRRGVSETAPASRRGELAVCDAVSGWVTDRRTAVDLRGREVEVLGEVPAAGGSPLRQYFFETRCKADNAEEGGPGAGGGGCRGVDRRHWVSECKAKQSYVRALTADAQGRVGWRWIRIDTACVCTLLSRTGRA.

A signal peptide spans 1-24 (MLPLPSCSLPILLLFLLPSVPIES). A propeptide spanning residues 25-80 (QPPPSTLPPFLAPEWDLLSPRVVLSRGAPAGPPLLFLLEAGAFRESAGAPANRSRR) is cleaved from the precursor. A glycan (N-linked (GlcNAc...) asparagine) is linked at asparagine 76. 3 disulfides stabilise this stretch: cysteine 97–cysteine 170, cysteine 141–cysteine 199, and cysteine 158–cysteine 201.

It belongs to the NGF-beta family. In terms of tissue distribution, highest levels in prostate, lower levels in thymus, placenta, and skeletal muscle. Expressed in embryonic and adult tissues.

The protein resides in the secreted. Its function is as follows. Target-derived survival factor for peripheral sensory sympathetic neurons. May promote ameloblast differentiation and subsequent reduction in proliferation of ameloblasts. In Homo sapiens (Human), this protein is Neurotrophin-4 (NTF4).